The following is a 197-amino-acid chain: Protein RESISTANCE TO PHYTOPHTHORA 1, chloroplastic (197 aa).

The N-terminal 52 residues, 1-52, are a transit peptide targeting the chloroplast; sequence MSWSLCSTHGVSSSIALTYGFRHRRRSTFRIFATSDGLEPKDDPPESPLPSS. A disordered region spans residues 35-56; that stretch reads SDGLEPKDDPPESPLPSSSSAL. 4 helical membrane-spanning segments follow: residues 93–113, 120–140, 150–170, and 173–193; these read FEVQ…NLLF, LWRL…LRAR, LNYL…FWKS, and LVWS…LGWL.

The protein resides in the plastid. It is found in the chloroplast. It localises to the membrane. Functionally, plays a positive role in the immune response to the oomycetes P.brassicae, including induced oxidative burst (e.g. H(2)O(2)) and enhanced expression of defense-related genes. This Arabidopsis thaliana (Mouse-ear cress) protein is Protein RESISTANCE TO PHYTOPHTHORA 1, chloroplastic.